The chain runs to 74 residues: Brevinin-2CG1 (74 aa).

An N-terminal signal peptide occupies residues 1 to 22 (MFTMKKSMLVLFFLGTISLSLC). A propeptide spans 23-39 (EEERNADEDDGEMTEEV) (removed in mature form). A disulfide bridge links cysteine 68 with cysteine 74.

As to expression, expressed by the skin glands.

It localises to the secreted. Antimicrobial peptide active against a variety of Gram-positive and some Gram-negative bacterial strains. Has antifungal activity against a slime mold isolate. Has hemolytic activity against human erythrocytes. This chain is Brevinin-2CG1, found in Amolops chunganensis (Chungan torrent frog).